Consider the following 182-residue polypeptide: Ribosome maturation factor RimM (182 aa).

One can recognise a PRC barrel domain in the interval 103–182; it reads EGDYYWKDLM…SIEVDWDPGF (80 aa).

The protein belongs to the RimM family. In terms of assembly, binds ribosomal protein uS19.

The protein resides in the cytoplasm. An accessory protein needed during the final step in the assembly of 30S ribosomal subunit, possibly for assembly of the head region. Essential for efficient processing of 16S rRNA. May be needed both before and after RbfA during the maturation of 16S rRNA. It has affinity for free ribosomal 30S subunits but not for 70S ribosomes. The chain is Ribosome maturation factor RimM from Escherichia coli O139:H28 (strain E24377A / ETEC).